A 102-amino-acid polypeptide reads, in one-letter code: MSAISRDEVAHLARLARLALTDAELDGYAGQLDAILGHVSQISAVSTDELDEVDATSSPLDAVNVTRPDVIAECLTPEEALAAAPRVAEGRFAVPQILGEEE.

Belongs to the GatC family. In terms of assembly, heterotrimer of A, B and C subunits.

It carries out the reaction L-glutamyl-tRNA(Gln) + L-glutamine + ATP + H2O = L-glutaminyl-tRNA(Gln) + L-glutamate + ADP + phosphate + H(+). The catalysed reaction is L-aspartyl-tRNA(Asn) + L-glutamine + ATP + H2O = L-asparaginyl-tRNA(Asn) + L-glutamate + ADP + phosphate + 2 H(+). In terms of biological role, allows the formation of correctly charged Asn-tRNA(Asn) or Gln-tRNA(Gln) through the transamidation of misacylated Asp-tRNA(Asn) or Glu-tRNA(Gln) in organisms which lack either or both of asparaginyl-tRNA or glutaminyl-tRNA synthetases. The reaction takes place in the presence of glutamine and ATP through an activated phospho-Asp-tRNA(Asn) or phospho-Glu-tRNA(Gln). This chain is Aspartyl/glutamyl-tRNA(Asn/Gln) amidotransferase subunit C, found in Mycobacteroides abscessus (strain ATCC 19977 / DSM 44196 / CCUG 20993 / CIP 104536 / JCM 13569 / NCTC 13031 / TMC 1543 / L948) (Mycobacterium abscessus).